The chain runs to 88 residues: Probable Fe(2+)-trafficking protein (88 aa).

Belongs to the Fe(2+)-trafficking protein family.

Could be a mediator in iron transactions between iron acquisition and iron-requiring processes, such as synthesis and/or repair of Fe-S clusters in biosynthetic enzymes. This chain is Probable Fe(2+)-trafficking protein, found in Alkalilimnicola ehrlichii (strain ATCC BAA-1101 / DSM 17681 / MLHE-1).